The chain runs to 331 residues: Glyoxylate reductase (331 aa).

NADP(+) contacts are provided by residues Phe-158–Ile-161, Ser-180–Thr-182, and Thr-239–Arg-241. Catalysis depends on residues Arg-241 and Glu-270. His-288 (proton donor) is an active-site residue. His-288–Gly-290 contacts NADP(+).

The protein belongs to the D-isomer specific 2-hydroxyacid dehydrogenase family. GyaR subfamily. Homodimer.

The protein resides in the cytoplasm. It catalyses the reaction glycolate + NAD(+) = glyoxylate + NADH + H(+). This is Glyoxylate reductase from Thermococcus litoralis (strain ATCC 51850 / DSM 5473 / JCM 8560 / NS-C).